Reading from the N-terminus, the 1568-residue chain is Kielin/chordin-like protein (1568 aa).

A signal peptide spans 1–23 (MAGVGAAALSLLLHLGALALAAG). Residues 27–49 (GAVPREPPGQQTTAHSSVLAGNS) form a disordered region. The span at 35-49 (GQQTTAHSSVLAGNS) shows a compositional bias: polar residues. Residues 60 to 87 (LGRLEAAVMELREQNKDLQTRVRQLESC) adopt a coiled-coil conformation. 16 VWFC domains span residues 136–193 (RGCS…PICR), 194–253 (PGCD…PTCQ), 253–312 (QGCT…PVCD), 312–370 (DGCF…PVCD), 426–485 (PACE…PSCD), 485–544 (DSCT…PRCP), 544–602 (PDCI…NDCS), 602–661 (SGCA…PQCP), 667–725 (AGCP…PSCD), 725–782 (DGCL…PDCD), 782–841 (DGCE…PTCQ), 900–959 (HSCL…PRCR), 959–1017 (RGCL…PQCS), 1017–1085 (SDCE…PTCA), 1082–1145 (PTCA…PVCR), and 1149–1209 (QSCV…PRCL). Asparagine 340 carries an N-linked (GlcNAc...) asparagine glycan. A glycan (N-linked (GlcNAc...) asparagine) is linked at asparagine 499. N-linked (GlcNAc...) asparagine glycosylation is present at asparagine 1090. The 177-residue stretch at 1213–1389 (ASCMAFGDPH…EGLWPGRPCS (177 aa)) folds into the VWFD domain. Cystine bridges form between cysteine 1215/cysteine 1347 and cysteine 1237/cysteine 1388. The 61-residue stretch at 1483–1543 (CPLERGFVFD…EAHCIPPEAC (61 aa)) folds into the TIL domain.

As to quaternary structure, interacts with BMP7 and, by doing so, enhances binding to the type I receptors that contains cytoplasmic serine/threonine protein kinase domains. Also able to interact with activin-A and TGFB1.

Its subcellular location is the secreted. Enhances bone morphogenetic protein (BMP) signaling in a paracrine manner. In contrast, it inhibits both the activin-A and TGFB1-mediated signaling pathways. This Homo sapiens (Human) protein is Kielin/chordin-like protein.